We begin with the raw amino-acid sequence, 159 residues long: uncharacterized protein (159 aa).

2 helical membrane-spanning segments follow: residues 59-79 and 91-113; these read IGAL…ALVY and VFSV…RRVC.

The protein resides in the cell membrane. This is an uncharacterized protein from Treponema pallidum (strain Nichols).